A 130-amino-acid polypeptide reads, in one-letter code: Glycine cleavage system H protein (130 aa).

A Lipoyl-binding domain is found at 24-106 (GIKVGISAFA…YQEGWLLKIT (83 aa)). Lysine 65 is modified (N6-lipoyllysine).

This sequence belongs to the GcvH family. As to quaternary structure, the glycine cleavage system is composed of four proteins: P, T, L and H. It depends on (R)-lipoate as a cofactor.

Functionally, the glycine cleavage system catalyzes the degradation of glycine. The H protein shuttles the methylamine group of glycine from the P protein to the T protein. This chain is Glycine cleavage system H protein, found in Synechococcus sp. (strain RCC307).